The following is a 235-amino-acid chain: Cytochrome c oxidase subunit 2 (235 aa).

Over 1–14 (MPYPMQLGFQDATS) the chain is Mitochondrial intermembrane. Residues 15–45 (PIMEELMYFHDHTLMIVFLISSLVLYIIILM) traverse the membrane as a helical segment. At 46–59 (LTTKLTHTSTMDAQ) the chain is on the mitochondrial matrix side. The helical transmembrane segment at 60 to 87 (EVETIWTILPAVILILIALPSLRILYMM) threads the bilayer. Over 88 to 235 (DEIYNPYLTV…MQSFLSYLYI (148 aa)) the chain is Mitochondrial intermembrane. Cu cation is bound by residues H161, C196, E198, C200, H204, and M207. Residue E198 participates in Mg(2+) binding. Phosphotyrosine is present on Y218.

Belongs to the cytochrome c oxidase subunit 2 family. In terms of assembly, component of the cytochrome c oxidase (complex IV, CIV), a multisubunit enzyme composed of 14 subunits. The complex is composed of a catalytic core of 3 subunits MT-CO1, MT-CO2 and MT-CO3, encoded in the mitochondrial DNA, and 11 supernumerary subunits COX4I, COX5A, COX5B, COX6A, COX6B, COX6C, COX7A, COX7B, COX7C, COX8 and NDUFA4, which are encoded in the nuclear genome. The complex exists as a monomer or a dimer and forms supercomplexes (SCs) in the inner mitochondrial membrane with NADH-ubiquinone oxidoreductase (complex I, CI) and ubiquinol-cytochrome c oxidoreductase (cytochrome b-c1 complex, complex III, CIII), resulting in different assemblies (supercomplex SCI(1)III(2)IV(1) and megacomplex MCI(2)III(2)IV(2)). Found in a complex with TMEM177, COA6, COX18, COX20, SCO1 and SCO2. Interacts with TMEM177 in a COX20-dependent manner. Interacts with COX20. Interacts with COX16. The cofactor is Cu cation.

It is found in the mitochondrion inner membrane. The enzyme catalyses 4 Fe(II)-[cytochrome c] + O2 + 8 H(+)(in) = 4 Fe(III)-[cytochrome c] + 2 H2O + 4 H(+)(out). Component of the cytochrome c oxidase, the last enzyme in the mitochondrial electron transport chain which drives oxidative phosphorylation. The respiratory chain contains 3 multisubunit complexes succinate dehydrogenase (complex II, CII), ubiquinol-cytochrome c oxidoreductase (cytochrome b-c1 complex, complex III, CIII) and cytochrome c oxidase (complex IV, CIV), that cooperate to transfer electrons derived from NADH and succinate to molecular oxygen, creating an electrochemical gradient over the inner membrane that drives transmembrane transport and the ATP synthase. Cytochrome c oxidase is the component of the respiratory chain that catalyzes the reduction of oxygen to water. Electrons originating from reduced cytochrome c in the intermembrane space (IMS) are transferred via the dinuclear copper A center (CU(A)) of subunit 2 and heme A of subunit 1 to the active site in subunit 1, a binuclear center (BNC) formed by heme A3 and copper B (CU(B)). The BNC reduces molecular oxygen to 2 water molecules using 4 electrons from cytochrome c in the IMS and 4 protons from the mitochondrial matrix. The polypeptide is Cytochrome c oxidase subunit 2 (MT-CO2) (Didelphis virginiana (North American opossum)).